We begin with the raw amino-acid sequence, 333 residues long: Fructose-1,6-bisphosphatase class 1 (333 aa).

The Mg(2+) site is built by glutamate 92, aspartate 113, leucine 115, and aspartate 116. Substrate contacts are provided by residues 116–119 (DGSS), asparagine 209, tyrosine 242, and lysine 272. Mg(2+) is bound at residue glutamate 278.

It belongs to the FBPase class 1 family. In terms of assembly, homotetramer. Requires Mg(2+) as cofactor.

The protein resides in the cytoplasm. It catalyses the reaction beta-D-fructose 1,6-bisphosphate + H2O = beta-D-fructose 6-phosphate + phosphate. It functions in the pathway carbohydrate biosynthesis; Calvin cycle. This chain is Fructose-1,6-bisphosphatase class 1, found in Chlorobaculum tepidum (strain ATCC 49652 / DSM 12025 / NBRC 103806 / TLS) (Chlorobium tepidum).